Consider the following 172-residue polypeptide: 3-hydroxydecanoyl-[acyl-carrier-protein] dehydratase (172 aa).

The active site involves His71.

This sequence belongs to the thioester dehydratase family. FabA subfamily. In terms of assembly, homodimer.

The protein localises to the cytoplasm. It carries out the reaction a (3R)-hydroxyacyl-[ACP] = a (2E)-enoyl-[ACP] + H2O. The catalysed reaction is (3R)-hydroxydecanoyl-[ACP] = (2E)-decenoyl-[ACP] + H2O. The enzyme catalyses (2E)-decenoyl-[ACP] = (3Z)-decenoyl-[ACP]. The protein operates within lipid metabolism; fatty acid biosynthesis. Functionally, necessary for the introduction of cis unsaturation into fatty acids. Catalyzes the dehydration of (3R)-3-hydroxydecanoyl-ACP to E-(2)-decenoyl-ACP and then its isomerization to Z-(3)-decenoyl-ACP. Can catalyze the dehydratase reaction for beta-hydroxyacyl-ACPs with saturated chain lengths up to 16:0, being most active on intermediate chain length. This chain is 3-hydroxydecanoyl-[acyl-carrier-protein] dehydratase, found in Klebsiella pneumoniae (strain 342).